We begin with the raw amino-acid sequence, 1183 residues long: Formin-like protein (1183 aa).

Disordered regions lie at residues 1 to 44 (MGAV…SISS) and 63 to 82 (QHVRQPSLRSRSQQPMPTTD). A compositionally biased stretch (basic residues) spans 23 to 36 (PHSHAHHHSMRNGH). The segment covering 63 to 79 (QHVRQPSLRSRSQQPMP) has biased composition (polar residues). The GBD/FH3 domain maps to 76–559 (QPMPTTDELD…HNEQELKKRD (484 aa)). Serine 225 carries the post-translational modification Phosphoserine. Over residues 572-584 (LSRSLPRSASSGD) the composition is skewed to polar residues. Residues 572–681 (LSRSLPRSAS…PPVAGFMPAP (110 aa)) form a disordered region. Composition is skewed to pro residues over residues 605–614 (LPPPPPPMPA) and 622–640 (APPPPPPPAPPAPPPPPGF). Positions 641–654 (SPLGSPSGSLASTA) are enriched in low complexity. An FH2 domain is found at 687-1088 (IKRKVPTKYK…AALAASKKEN (402 aa)). Residues 1136–1169 (DEVYNGALEDILLGLKSEPYRRADAVRRSQRRRI) enclose the DAD domain.

This sequence belongs to the formin homology family. As to quaternary structure, self-associates. Interacts (via GBD/FH3 domain) with Cdc42; the interaction is stronger with the GTP bound form of Cdc42.

Its function is as follows. Together with Cdc42, involved in establishment of planar cell polarity in the developing compound eye by contributing to ommatidial rotation. Together with DAAM and Cdc42, has a role in neuronal development of mushroom bodies. The polypeptide is Formin-like protein (Drosophila melanogaster (Fruit fly)).